A 290-amino-acid chain; its full sequence is Shikimate kinase (290 aa).

Residue Pro81 to Ala91 coordinates ATP.

Belongs to the GHMP kinase family. Archaeal shikimate kinase subfamily.

Its subcellular location is the cytoplasm. The enzyme catalyses shikimate + ATP = 3-phosphoshikimate + ADP + H(+). It participates in metabolic intermediate biosynthesis; chorismate biosynthesis; chorismate from D-erythrose 4-phosphate and phosphoenolpyruvate: step 5/7. The polypeptide is Shikimate kinase (Methanocella arvoryzae (strain DSM 22066 / NBRC 105507 / MRE50)).